We begin with the raw amino-acid sequence, 338 residues long: MAAPGRPSPLAERLRGAWQHRGALALALWPLSLLYGVLTALRRALYRTGLLRSERLPVPVIVVGNVIAGGAGKTPVTLAVVRHLQARGWRPGVISRGYGRATADCREVLPASSAAEVGDEPLLIARASGAPVFVARRRAQAGRALLAAHPATNILVCDDGLQHLALARDLEVCVFNDEGAGNGWLLPAGPLREPWPRAVDLVLHAGSPPGGGAPQFALSRELAAHAVNASGQHLPLEQLQGEPLHALAAIARPHDFFAMLHARGLQPESEEALPDHYDFSSWKRPPDKRLRLICTEKDAVKLWPAHPDALAVPLALRIPPAFFDTLDARLASLSSSGH.

An ATP-binding site is contributed by 67 to 74 (IAGGAGKT).

Belongs to the LpxK family.

It catalyses the reaction a lipid A disaccharide + ATP = a lipid IVA + ADP + H(+). The protein operates within glycolipid biosynthesis; lipid IV(A) biosynthesis; lipid IV(A) from (3R)-3-hydroxytetradecanoyl-[acyl-carrier-protein] and UDP-N-acetyl-alpha-D-glucosamine: step 6/6. Transfers the gamma-phosphate of ATP to the 4'-position of a tetraacyldisaccharide 1-phosphate intermediate (termed DS-1-P) to form tetraacyldisaccharide 1,4'-bis-phosphate (lipid IVA). The chain is Tetraacyldisaccharide 4'-kinase from Acidovorax sp. (strain JS42).